We begin with the raw amino-acid sequence, 858 residues long: Rho GTPase-activating protein 17 (858 aa).

Residues 14–246 form the BAR domain; sequence QTVGRAEKTE…MRAHQDKWAE (233 aa). The Rho-GAP domain occupies 252–442; that stretch reads TPLEEHLKRS…PIIQHADWFF (191 aa). Positions 459–475 are enriched in polar residues; that stretch reads TPNSNHSSHTGNDSDSG. Positions 459 to 482 are disordered; that stretch reads TPNSNHSSHTGNDSDSGTLERKRP. Serine 484 carries the phosphoserine modification. Positions 516–823 are disordered; sequence RKHISPAFQP…VTDTNSRVSE (308 aa). Over residues 543 to 552 the composition is skewed to polar residues; sequence PSQSSRADSN. Over residues 553–563 the composition is skewed to low complexity; the sequence is SVGGPVPSSSG. Phosphoserine is present on serine 575. Positions 592-617 are enriched in polar residues; the sequence is RNSNQITTVPNQAQTGGNSHQLSVGT. Over residues 637-650 the composition is skewed to pro residues; sequence APAPPKPGNPPPGH. Residues 653 to 702 show a composition bias toward low complexity; sequence GQSSPGTGTSPKPSTRSPSPPQQQQQQQQQQQQQQQQQQQQQQQQQQQQQ. A phosphoserine mark is found at serine 710 and serine 712. Composition is skewed to pro residues over residues 716-729 and 738-756; these read IQAP…PPTQ and EPGP…PPPA. Threonine 742, threonine 746, and threonine 748 each carry phosphothreonine. Positions 742-755 match the SH3-binding motif; it reads TPPQTPTPPSTPPP. Phosphoserine is present on serine 751. The residue at position 752 (threonine 752) is a Phosphothreonine. A compositionally biased stretch (polar residues) spans 757–769; the sequence is KQNSSQSETTQLH. The span at 784 to 794 shows a compositional bias: pro residues; sequence RPSVPPPPNPP. A compositionally biased stretch (polar residues) spans 806 to 823; the sequence is SVPTASRIVTDTNSRVSE.

As to quaternary structure, component of a complex whose core is composed of ARHGAP17, AMOT, PALS1, PATJ and PARD3/PAR3. Interacts with NHERF1, FNBP1, TRIP10, CAPZA (CAPZA1, CAPZA2 or CAPZA3), CAPZB, CD2AP and SH3KBP1/CIN85. Highly expressed in brain; neuron-specific (at protein level). Isoform 2, isoform 3 and isoform 4 are predominantly expressed in neuronal tissues and correlate well with the differentiation of neurons, while isoform 1 is strongly expressed in embryonic brain.

Its subcellular location is the membrane. It localises to the cytoplasm. The protein resides in the cell junction. The protein localises to the tight junction. In terms of biological role, rho GTPase-activating protein involved in the maintenance of tight junction by regulating the activity of CDC42, thereby playing a central role in apical polarity of epithelial cells. Specifically acts as a GTPase activator for the CDC42 GTPase by converting it to an inactive GDP-bound state. The complex formed with AMOT acts by regulating the uptake of polarity proteins at tight junctions, possibly by deciding whether tight junction transmembrane proteins are recycled back to the plasma membrane or sent elsewhere. Participates in the Ca(2+)-dependent regulation of exocytosis, possibly by catalyzing GTPase activity of Rho family proteins and by inducing the reorganization of the cortical actin filaments. Acts as a GTPase activator in vitro for RAC1. The sequence is that of Rho GTPase-activating protein 17 (Arhgap17) from Rattus norvegicus (Rat).